Here is a 176-residue protein sequence, read N- to C-terminus: Tubulin polymerization-promoting protein family member 3 (176 aa).

A2 is modified (N-acetylalanine).

It belongs to the TPPP family.

The protein resides in the cytoplasm. Its subcellular location is the cytoskeleton. Functionally, regulator of microtubule dynamic that has microtubule bundling activity. Required for embryo implantation; possibly by regulating beta-catenin. Also required for decidualization via regulation of beta-catenin. In Bos taurus (Bovine), this protein is Tubulin polymerization-promoting protein family member 3 (TPPP3).